We begin with the raw amino-acid sequence, 363 residues long: Chorismate synthase (363 aa).

Arg-48 serves as a coordination point for NADP(+). FMN contacts are provided by residues 125-127 (RSS), 238-239 (NA), Gly-278, 293-297 (KPTAS), and Arg-319.

It belongs to the chorismate synthase family. As to quaternary structure, homotetramer. It depends on FMNH2 as a cofactor.

The catalysed reaction is 5-O-(1-carboxyvinyl)-3-phosphoshikimate = chorismate + phosphate. It participates in metabolic intermediate biosynthesis; chorismate biosynthesis; chorismate from D-erythrose 4-phosphate and phosphoenolpyruvate: step 7/7. In terms of biological role, catalyzes the anti-1,4-elimination of the C-3 phosphate and the C-6 proR hydrogen from 5-enolpyruvylshikimate-3-phosphate (EPSP) to yield chorismate, which is the branch point compound that serves as the starting substrate for the three terminal pathways of aromatic amino acid biosynthesis. This reaction introduces a second double bond into the aromatic ring system. The polypeptide is Chorismate synthase (Acinetobacter baumannii (strain SDF)).